The sequence spans 302 residues: DNA-directed RNA polymerase II subunit rpb3 (302 aa).

It belongs to the archaeal Rpo3/eukaryotic RPB3 RNA polymerase subunit family. In terms of assembly, component of the RNA polymerase II (Pol II) complex consisting of 12 subunits.

It localises to the nucleus. Its function is as follows. DNA-dependent RNA polymerase catalyzes the transcription of DNA into RNA using the four ribonucleoside triphosphates as substrates. Component of RNA polymerase II which synthesizes mRNA precursors and many functional non-coding RNAs. Pol II is the central component of the basal RNA polymerase II transcription machinery. It is composed of mobile elements that move relative to each other. Rpb3 is part of the core element with the central large cleft and the clamp element that moves to open and close the cleft. The chain is DNA-directed RNA polymerase II subunit rpb3 (polr2c) from Dictyostelium discoideum (Social amoeba).